A 492-amino-acid chain; its full sequence is Aerolysin (492 aa).

Positions 1-21 are cleaved as a signal peptide; that stretch reads MKALKITGLSLIISATLAAQT. Disulfide bonds link Cys-42–Cys-98 and Cys-182–Cys-187. The interaction with host N-linked glycan stretch occupies residues 68-84; it reads WQISGLANNWVILGPGY. Residues 256-288 are part of the transmembrane beta-barrel after proteolytic activation of the toxin and insertion into the host membrane; the sequence is YGLSEKVSTKNKFKWPLVGETEVSIEIAANQSW. The interval 346 to 355 is interaction with glycans from host GPI-anchor; sequence RWGGNAWHTH. A propeptide spanning residues 446 to 492 is cleaved from the precursor; the sequence is GSDSKVRRTRSVDGANTGLKLDIPLDAQELAELGFENVTLSVTPARN.

The protein belongs to the aerolysin family. Homodimer in solution; homoheptamer in the host membrane. After binding to GPI-anchored proteins in target membranes and proteolytic removal of the C-terminal propeptide, the protein assembles into a heptameric pre-pore complex. A further conformation change leads to insertion into the host membrane. Proteolytic cleavage and subsequent release of the propeptide trigger a major conformation change, leading to the formation of a heptameric pre-pore that then inserts into the host membrane.

It is found in the secreted. Its subcellular location is the host cell membrane. In terms of biological role, secreted, cytolytic toxin that forms pores in host membranes after proteolytic removal of a C-terminal propeptide, leading to destruction of the membrane permeability barrier and cell death. The pores are formed by transmembrane beta-strands and are approximately 3 nm in diameter. The sequence is that of Aerolysin (aerA) from Aeromonas enteropelogenes (Aeromonas trota).